The chain runs to 88 residues: L-amino-acid oxidase (88 aa).

FAD is bound by residues E74 and 81–86 (GWIDST). 81 to 82 (GW) contributes to the substrate binding site.

This sequence belongs to the flavin monoamine oxidase family. FIG1 subfamily. Homodimer; non-covalently linked. FAD serves as cofactor. In terms of processing, N-glycosylated. In terms of tissue distribution, expressed by the venom gland.

The protein localises to the secreted. The catalysed reaction is an L-alpha-amino acid + O2 + H2O = a 2-oxocarboxylate + H2O2 + NH4(+). The enzyme catalyses L-leucine + O2 + H2O = 4-methyl-2-oxopentanoate + H2O2 + NH4(+). It catalyses the reaction L-phenylalanine + O2 + H2O = 3-phenylpyruvate + H2O2 + NH4(+). It carries out the reaction L-tryptophan + O2 + H2O = indole-3-pyruvate + H2O2 + NH4(+). The catalysed reaction is L-methionine + O2 + H2O = 4-methylsulfanyl-2-oxobutanoate + H2O2 + NH4(+). The enzyme catalyses L-isoleucine + O2 + H2O = (S)-3-methyl-2-oxopentanoate + H2O2 + NH4(+). It catalyses the reaction L-arginine + O2 + H2O = 5-guanidino-2-oxopentanoate + H2O2 + NH4(+). It carries out the reaction L-histidine + O2 + H2O = 3-(imidazol-5-yl)pyruvate + H2O2 + NH4(+). The catalysed reaction is L-asparagine + O2 + H2O = 2-oxosuccinamate + H2O2 + NH4(+). The enzyme catalyses L-valine + O2 + H2O = 3-methyl-2-oxobutanoate + H2O2 + NH4(+). It catalyses the reaction L-glutamate + O2 + H2O = H2O2 + 2-oxoglutarate + NH4(+). Its function is as follows. Catalyzes an oxidative deamination of predominantly hydrophobic and aromatic L-amino acids, thus producing hydrogen peroxide that may contribute to the diverse toxic effects of this enzyme. Is highly active on L-Met, L-Leu, L-Phe, L-Ile, and L-Arg, moderately active on L-His, L-Trp, L-Asn, L-Glu, and L-Val, and weakly or not active on L-Gln, L-Lys, L-Asp, L-Ala, L-Tyr, L-Ser, L-Pro, L-Gly, L-Thr, and L-Cys. Exhibits diverse biological activities, such as hemorrhage, hemolysis, edema, apoptosis of vascular endothelial cells or tumor cell lines, antibacterial and antiparasitic activities. In addition, this protein has an ability to induce apoptosis in cultured HeLa and K562 cells, and inhibits ADP-induced platelet aggregation dose-dependently. Effects of snake L-amino oxidases on platelets are controversial, since they either induce aggregation or inhibit agonist-induced aggregation. These different effects are probably due to different experimental conditions. The polypeptide is L-amino-acid oxidase (Vipera berus berus (Common viper)).